Reading from the N-terminus, the 317-residue chain is Forkhead box protein B2 (317 aa).

The segment at residues Lys-13 to Lys-107 is a DNA-binding region (fork-head).

As to expression, first expressed within the dorsolateral ectoderm, except for the organizer territory. During gastrulation, expressed in 2 ectodermal stripes adjacent to the dorsal midline. With the onset of neurulation, expression shifts first to the neural plate before settling on the bottom of the neural tube, on top of the notochord. Expression is then absent until stage 35, at which stage a pair of cells in the fourth rhombomere in the dorsolateral outer area of the rhombencephalon show expression. This is followed shortly afterwards by expression in a pair of cells in rhombomere 6 at the ventricular side of the rhombencephalon.

The protein resides in the nucleus. Its function is as follows. Transcription factor. The polypeptide is Forkhead box protein B2 (Xenopus laevis (African clawed frog)).